Reading from the N-terminus, the 301-residue chain is Nucleosome assembly protein 1;3 (301 aa).

Residues 15–69 (VETLKNKLQALAEQHVDVLESLAPVVRKRVDVLIEIQSQHDELEAKFLEEKAALE) adopt a coiled-coil conformation. Residues 36 to 51 (LAPVVRKRVDVLIEIQ) carry the Nuclear export signal motif. Residues 278-301 (DEDYGASWVDDEEDDDDEYSDEEA) form a disordered region.

The protein belongs to the nucleosome assembly protein (NAP) family.

Its subcellular location is the nucleus. It localises to the cytoplasm. Its function is as follows. May modulate chromatin structure by regulation of nucleosome assembly/disassembly. This chain is Nucleosome assembly protein 1;3 (NAP1;3), found in Oryza sativa subsp. japonica (Rice).